A 448-amino-acid polypeptide reads, in one-letter code: Hyaluronidase conohyal-Cn1 (448 aa).

An N-terminal signal peptide occupies residues methionine 1–alanine 18. The propeptide occupies leucine 19–arginine 33. The disordered stretch occupies residues valine 26–glutamine 55. Residues serine 31–glycine 43 are compositionally biased toward low complexity. A disulfide bridge connects residues cysteine 67 and cysteine 344. The N-linked (GlcNAc...) asparagine glycan is linked to asparagine 141. Residue glutamate 151 is the Proton donor of the active site. Asparagine 169 and asparagine 361 each carry an N-linked (GlcNAc...) asparagine glycan. 3 cysteine pairs are disulfide-bonded: cysteine 369–cysteine 380, cysteine 374–cysteine 413, and cysteine 415–cysteine 424. The EGF-like domain occupies cysteine 413–cysteine 424.

Belongs to the glycosyl hydrolase 56 family. As to expression, expressed by the venom duct.

The protein resides in the secreted. It carries out the reaction Random hydrolysis of (1-&gt;4)-linkages between N-acetyl-beta-D-glucosamine and D-glucuronate residues in hyaluronate.. Its function is as follows. Hyaluronidase catalyzes the hydrolysis of hyaluronic acid (HA), an anionic, nonsulfated glycosaminoglycan distributed widely throughout connective, epithelial, and neural tissues. In venom, they are known to enhance diffusion of the venom by degrading the extracellular matrix. This is Hyaluronidase conohyal-Cn1 from Conus consors (Singed cone).